The chain runs to 72 residues: MSKEEVLEFSGVVTELLPNAMFRVKLENDHEIIAHTAGRMRKNRIRVLAGDKIMVEMTPYDLTKGRITYRYK.

Residues 1–72 (MSKEEVLEFS…TKGRITYRYK (72 aa)) form the S1-like domain.

The protein belongs to the IF-1 family. As to quaternary structure, component of the 30S ribosomal translation pre-initiation complex which assembles on the 30S ribosome in the order IF-2 and IF-3, IF-1 and N-formylmethionyl-tRNA(fMet); mRNA recruitment can occur at any time during PIC assembly.

It localises to the cytoplasm. Its function is as follows. One of the essential components for the initiation of protein synthesis. Stabilizes the binding of IF-2 and IF-3 on the 30S subunit to which N-formylmethionyl-tRNA(fMet) subsequently binds. Helps modulate mRNA selection, yielding the 30S pre-initiation complex (PIC). Upon addition of the 50S ribosomal subunit IF-1, IF-2 and IF-3 are released leaving the mature 70S translation initiation complex. This is Translation initiation factor IF-1 from Bartonella tribocorum (strain CIP 105476 / IBS 506).